The sequence spans 544 residues: Probable protein kinase UbiB (544 aa).

Positions 123–500 (DFDEKALASA…RNKQRKSQYL (378 aa)) constitute a Protein kinase domain. ATP-binding positions include 129 to 137 (LASASIAQV) and Lys-152. The active-site Proton acceptor is the Asp-286. A run of 2 helical transmembrane segments spans residues 499–519 (YLLG…ISAS) and 522–542 (MAIA…YKSG).

Belongs to the ABC1 family. UbiB subfamily.

Its subcellular location is the cell inner membrane. The protein operates within cofactor biosynthesis; ubiquinone biosynthesis [regulation]. Is probably a protein kinase regulator of UbiI activity which is involved in aerobic coenzyme Q (ubiquinone) biosynthesis. Required for the expression of 2'-N-acetyltransferase. The polypeptide is Probable protein kinase UbiB (Providencia stuartii).